We begin with the raw amino-acid sequence, 352 residues long: Pejvakin (352 aa).

This sequence belongs to the gasdermin family. As to quaternary structure, interacts with MAP1LC3B; interaction is direct. Interacts with IQGAP1. Interacts with ROCK2. Interacts with TRIOBP. In ear, it is detected in the organ of Corti and the spiral ganglion within the cochlea in the sensory areas of the vestibule (cristae ampullares of the semicircular ducts, and maculae of the saccule and utricle) and in the first 3 relays (cochlear nuclei, superior olivary complex and inferior colliculus) of the afferent auditory pathway. Detected in hair cells of the cochlea and vestibule but not in neurons. In the afferent auditory pathway, it is present in the cell bodies of neurons but not in fiber bundles such as the trapezoid body in the brainstem. Also detected in spiral ganglion cells, which form the auditory nerve and project to the cochlear nuclei in the brainstem. Also present in the cochlear nuclei, the superior olive and the inferior colliculus (at protein level). Expressed in all the adult organs tested: brain, eye, inner ear, heart, lung, kidney, liver, intestine, testis and weakly in skeletal muscle.

The protein localises to the peroxisome membrane. It localises to the cell projection. The protein resides in the cilium. Functionally, peroxisome-associated protein required to protect auditory hair cells against noise-induced damage. Acts by regulating noise-induced peroxisome proliferation in auditory hair cells and neurons, and promoting autophagic degradation of damaged peroxisomes (pexophagy). Noise overexposure increases reactive oxygen species (ROS) levels, causing oxidative damage to auditory hair cells and resulting in hearing loss. PJVK acts as a ROS sensor that recruits the autophagy machinery to trigger pexophagy of peroxisomes damaged by oxidative stress. In addition to pexophagy, also required to promote peroxisome proliferation in response to sound overstimulation. This Mus musculus (Mouse) protein is Pejvakin.